The primary structure comprises 113 residues: Hydrogenase maturation factor HypA (113 aa).

His-2 is a Ni(2+) binding site. The Zn(2+) site is built by Cys-73, Cys-76, Cys-89, and Cys-92.

It belongs to the HypA/HybF family.

Its function is as follows. Involved in the maturation of [NiFe] hydrogenases. Required for nickel insertion into the metal center of the hydrogenase. This Alkalilimnicola ehrlichii (strain ATCC BAA-1101 / DSM 17681 / MLHE-1) protein is Hydrogenase maturation factor HypA.